We begin with the raw amino-acid sequence, 727 residues long: Glycerol-3-phosphate dehydrogenase, mitochondrial (727 aa).

The transit peptide at 1–42 directs the protein to the mitochondrion; sequence MAFQKAVKGTILVGGGALATVLGLSQFAHYRRKQMNLAYVKA. 71 to 99 is an FAD binding site; sequence DILVIGGGATGSGCALDAVTRGLKTALVE. Phosphotyrosine is present on Y601. EF-hand domains are found at residues 623–658 and 659–694; these read SDIDRYKKRFHKFDADQKGFITIVDVQRVLESINVQ and MDENTLHEILNEVDLNKNGQVELNEFLQLMSAIQKG. Positions 672, 674, 676, 678, and 683 each coordinate Ca(2+).

Belongs to the FAD-dependent glycerol-3-phosphate dehydrogenase family. FAD is required as a cofactor.

The protein resides in the mitochondrion. The catalysed reaction is a quinone + sn-glycerol 3-phosphate = dihydroxyacetone phosphate + a quinol. The protein operates within polyol metabolism; glycerol degradation via glycerol kinase pathway; glycerone phosphate from sn-glycerol 3-phosphate (anaerobic route): step 1/1. Calcium-binding enhance the activity of the enzyme. Its function is as follows. Calcium-responsive mitochondrial glycerol-3-phosphate dehydrogenase which seems to be a key component of the pancreatic beta-cell glucose-sensing device. The sequence is that of Glycerol-3-phosphate dehydrogenase, mitochondrial from Homo sapiens (Human).